Consider the following 637-residue polypeptide: DNA primase (637 aa).

The segment at 39-63 adopts a CHC2-type zinc-finger fold; sequence CPFHGEKTPSFNVNAEKGFYHCFGC. Residues 257–338 form the Toprim domain; that stretch reads HEVYLMEGFM…QIVKVPEGLD (82 aa). Mg(2+) is bound by residues glutamate 263, aspartate 307, and aspartate 309.

The protein belongs to the DnaG primase family. In terms of assembly, monomer. Interacts with DnaB. Zn(2+) serves as cofactor. Requires Mg(2+) as cofactor.

It carries out the reaction ssDNA + n NTP = ssDNA/pppN(pN)n-1 hybrid + (n-1) diphosphate.. RNA polymerase that catalyzes the synthesis of short RNA molecules used as primers for DNA polymerase during DNA replication. The chain is DNA primase from Lactococcus lactis subsp. lactis (strain IL1403) (Streptococcus lactis).